The chain runs to 345 residues: D-alanine--D-alanine ligase (345 aa).

In terms of domain architecture, ATP-grasp spans K133–T332. ATP is bound at residue A160–Y211. Residues D284, E296, and N298 each contribute to the Mg(2+) site.

This sequence belongs to the D-alanine--D-alanine ligase family. Requires Mg(2+) as cofactor. It depends on Mn(2+) as a cofactor.

It is found in the cytoplasm. The enzyme catalyses 2 D-alanine + ATP = D-alanyl-D-alanine + ADP + phosphate + H(+). Its pathway is cell wall biogenesis; peptidoglycan biosynthesis. Functionally, cell wall formation. The polypeptide is D-alanine--D-alanine ligase (Sulfurimonas denitrificans (strain ATCC 33889 / DSM 1251) (Thiomicrospira denitrificans (strain ATCC 33889 / DSM 1251))).